The primary structure comprises 273 residues: Undecaprenyl-diphosphatase (273 aa).

The next 7 membrane-spanning stretches (helical) occupy residues 6 to 26 (SLLI…LPVS), 45 to 65 (AKTF…VMFW), 90 to 110 (LTLI…LLFH), 116 to 136 (LFNP…LIAA), 190 to 210 (YAAS…ATAL), 222 to 242 (GDIS…LIAI), and 252 to 272 (ISFI…YVVF).

Belongs to the UppP family.

Its subcellular location is the cell inner membrane. The catalysed reaction is di-trans,octa-cis-undecaprenyl diphosphate + H2O = di-trans,octa-cis-undecaprenyl phosphate + phosphate + H(+). Functionally, catalyzes the dephosphorylation of undecaprenyl diphosphate (UPP). Confers resistance to bacitracin. This chain is Undecaprenyl-diphosphatase, found in Shigella sonnei (strain Ss046).